An 89-amino-acid polypeptide reads, in one-letter code: Small ribosomal subunit protein uS15 (89 aa).

The protein belongs to the universal ribosomal protein uS15 family. As to quaternary structure, part of the 30S ribosomal subunit. Forms a bridge to the 50S subunit in the 70S ribosome, contacting the 23S rRNA.

Functionally, one of the primary rRNA binding proteins, it binds directly to 16S rRNA where it helps nucleate assembly of the platform of the 30S subunit by binding and bridging several RNA helices of the 16S rRNA. Forms an intersubunit bridge (bridge B4) with the 23S rRNA of the 50S subunit in the ribosome. This chain is Small ribosomal subunit protein uS15, found in Pseudarthrobacter chlorophenolicus (strain ATCC 700700 / DSM 12829 / CIP 107037 / JCM 12360 / KCTC 9906 / NCIMB 13794 / A6) (Arthrobacter chlorophenolicus).